The sequence spans 628 residues: DEAD-box ATP-dependent RNA helicase 9 (628 aa).

A Q motif motif is present at residues 98–126; the sequence is LEVAKLGISPKIVSQLASRGITKLFPIQR. The Helicase ATP-binding domain occupies 129 to 302; sequence LEPAMQGKDM…QKYLKNPVTI (174 aa). Position 142 to 149 (142 to 149) interacts with ATP; the sequence is AKTGTGKT. The short motif at 250-253 is the DEAD box element; sequence DEAD. Residues 331 to 478 enclose the Helicase C-terminal domain; sequence VLGELIKEHA…KINVEGSDLM (148 aa). 2 disordered regions span residues 496-548 and 571-628; these read GSYG…SGFG and SGFG…FGSS. Residues 500–509 are compositionally biased toward low complexity; that stretch reads RRGSFGSSSS. Positions 510 to 548 are enriched in gly residues; that stretch reads RGGGFGDSGFGRSGGGFGRSGGGGFGRSSGGGFGDSGFG.

Belongs to the DEAD box helicase family. DDX21/DDX50 subfamily.

It carries out the reaction ATP + H2O = ADP + phosphate + H(+). The polypeptide is DEAD-box ATP-dependent RNA helicase 9 (Oryza sativa subsp. japonica (Rice)).